We begin with the raw amino-acid sequence, 695 residues long: Protein ACTIVITY OF BC1 COMPLEX KINASE 7, chloroplastic (695 aa).

Residues 259–589 (EFEEQPIAAA…VQEIRKQADD (331 aa)) enclose the Protein kinase domain. ATP contacts are provided by residues 265–273 (IAAASLGQV) and K287. The Proton acceptor role is filled by D421. A run of 2 helical transmembrane segments spans residues 633-653 (TILQ…NIGV) and 659-679 (GSQL…LLVL).

Belongs to the protein kinase superfamily. ADCK protein kinase family. As to expression, mostly expressed in leaves and flowers, and, to a lower extent, in roots.

It is found in the plastid. Its subcellular location is the chloroplast thylakoid membrane. It localises to the chloroplast. The protein resides in the plastoglobule. The catalysed reaction is L-seryl-[protein] + ATP = O-phospho-L-seryl-[protein] + ADP + H(+). The enzyme catalyses L-threonyl-[protein] + ATP = O-phospho-L-threonyl-[protein] + ADP + H(+). Functionally, involved in resistance to oxidative stress. Influences responses to reactive oxygen species (ROS) production. Regulates plastoglobules formation in thylakoids. Together with OSA1, regulates iron distribution within the chloroplast and mediates the oxidative stress response. Together with ABC1K8, influences chloroplast lipid synthesis/accumulation and modulates chloroplast membrane composition in response to stress. The chain is Protein ACTIVITY OF BC1 COMPLEX KINASE 7, chloroplastic from Arabidopsis thaliana (Mouse-ear cress).